The chain runs to 227 residues: UPF0173 metal-dependent hydrolase Tlet_1100 (227 aa).

The protein belongs to the UPF0173 family.

In Pseudothermotoga lettingae (strain ATCC BAA-301 / DSM 14385 / NBRC 107922 / TMO) (Thermotoga lettingae), this protein is UPF0173 metal-dependent hydrolase Tlet_1100.